We begin with the raw amino-acid sequence, 77 residues long: U8-hexatoxin-Mg1a (77 aa).

Positions 1–22 (MKVFSFTIGLVVIISLFAFALA) are cleaved as a signal peptide. Positions 23-43 (YDEETDLMKKLVEMERAIEQR) are excised as a propeptide. Intrachain disulfides connect cysteine 46–cysteine 60, cysteine 53–cysteine 65, and cysteine 59–cysteine 76.

Expressed by the venom gland.

It is found in the secreted. Intrathorax injection into crickets causes paralysis prolonged for more than 60 minutes, followed by recovery. The chain is U8-hexatoxin-Mg1a from Macrothele gigas (Japanese funnel web spider).